A 263-amino-acid chain; its full sequence is Achaete-scute homolog 2 (263 aa).

Disordered regions lie at residues 104-126 (RRRR…RNER) and 194-248 (PPSD…ELSP). Composition is skewed to low complexity over residues 110–121 (ATEASSSSAAVA), 202–220 (PSAS…SPSP), and 230–247 (SPRS…GELS). The bHLH domain occupies 118-170 (AAVARRNERERNRVKLVNLGFQALRQHVPHGGANKKLSKVETLRSAVEYIRAL).

As to quaternary structure, efficient DNA binding requires dimerization with another basic helix-loop-helix (bHLH) protein. Forms heterodimers with bHLH transcription factor TCF3. May not heterodimerise with bHLH protein HAND1. As to expression, expressed in follicular T-helper (Tfh) cells.

It localises to the nucleus. Functionally, transcription factor. Binds to E-box motifs 5'-CANNTG-3' in the regulatory elements of target genes, probably as a heterodimer with another basic helix-loop-helix (bHLH) protein such as the transcription factor TCF3. May bind both open and closed chromatin, acting as a pioneer transcription factor to allow other factors to bind and activate lineage-specific genes. Required during post-implantation development for the generation of some differentiated trophoblast cell types. Transcriptional activity of ASCL2 may be antagonised in a subset of trophoblast cells by bHLH transcription factor HAND1, perhaps by competing for dimerization with other bHLH proteins. Involved in differentiation and function of follicular T-helper (Tfh) cells, thereby playing a role in germinal center responses; probably modulates expression of genes involved in Tfh cell function, such as BCL6. May also act as a suppressor of Th1-, Th2- and Th17-cell differentiation. Induces the formation of stem cells in intestinal crypts in vitro, synergistically activating transcription of target genes, such as SOX9, together with TCF4/beta-catenin. May form a bistable transcriptional switch, controlling expression of its own gene together with Wnt/R-spondin signaling, and thereby maintaining stem cell characteristics. Modulates expression of target genes, including perhaps down-regulating EGR1/Krox24 and chemokine CXCL10/Mob-1 and up-regulating CXCR4 and CDKN1C/p57kip2, in Schwann cells. May play a role in reducing proliferation of Schwann cells, perhaps acting via modulation of expression of CDKN1C. May be dispensable for blastocyst formation and later embryonic function. May be involved in the determination of neuronal precursors. The chain is Achaete-scute homolog 2 (Ascl2) from Mus musculus (Mouse).